Here is a 219-residue protein sequence, read N- to C-terminus: Lipid transferase CIDEB (219 aa).

Residues 34-110 (PQRPFRVCDH…VLQSGQSWSP (77 aa)) enclose the CIDE-N domain.

Belongs to the CIDE family. As to quaternary structure, interacts with DFFA. Interacts with DFFB; inhibited by DFFB. Interacts with APOB. Interacts with PREB/SEC12; facilitating loading of SCAP-SREBP into COPII vesicles. In terms of assembly, (Microbial infection) Interacts (via N-terminus) with HCV non-structural protein 5A (via N-terminus); this interaction seems to regulate the association of HCV particles with ApoE. In terms of tissue distribution, highly expressed in liver and small intestine and, at lower levels, in colon, kidney and spleen.

The protein resides in the lipid droplet. It localises to the endoplasmic reticulum membrane. The protein localises to the golgi apparatus. It is found in the cytoplasmic vesicle. Its subcellular location is the COPI-coated vesicle. Functionally, lipid transferase specifically expressed in hepatocytes, which promotes unilocular lipid droplet formation by mediating lipid droplet fusion. Lipid droplet fusion promotes their enlargement, restricting lipolysis and favoring lipid storage. Localizes on the lipid droplet surface, at focal contact sites between lipid droplets, and mediates atypical lipid droplet fusion by promoting directional net neutral lipid transfer from the smaller to larger lipid droplets. The transfer direction may be driven by the internal pressure difference between the contacting lipid droplet pair. Promotes lipid exchange and lipid droplet fusion in both small and large lipid droplet-containing hepatocytes. In addition to its role in lipid droplet fusion, also involved in cytoplasmic vesicle biogenesis and transport. Required for very-low-density lipoprotein (VLDL) lipidation and maturation. Probably involved in the biogenesis of VLDL transport vesicles by forming a COPII vesicle coat and facilitating the formation of endoplasmic reticulum-derived large vesicles. Also involved in sterol-regulated export of the SCAP-SREBP complex, composed of SCAP, SREBF1/SREBP1 and SREBF2/SREBP2, by promoting loading of SCAP-SREBP into COPII vesicles. May also activate apoptosis. (Microbial infection) Involved in Hepatatis C virus (HCV) assembly and required for HCV entry into hepatocytes. The polypeptide is Lipid transferase CIDEB (Homo sapiens (Human)).